Reading from the N-terminus, the 712-residue chain is Protein phosphatase 1 regulatory subunit 37 (712 aa).

A compositionally biased stretch (pro residues) spans 1–12; it reads MEIPPQEAPPGP. Residues 1–47 form a disordered region; that stretch reads MEIPPQEAPPGPGADADADAEAETEEASAEAESPTGTSPPADGRLKA. Positions 16 to 29 are enriched in acidic residues; sequence ADADAEAETEEASA. Serine 56 and serine 62 each carry phosphoserine. 5 LRR repeats span residues 226–246, 254–275, 283–303, 312–332, and 340–360; these read SLAV…MLLA, NLRE…AQLG, SLQI…AYIC, GLVT…AFLG, and SLET…RNLK. The interval 492–680 is disordered; that stretch reads ESGELPAVGS…PPGLEAKGGS (189 aa). Positions 514 to 531 are enriched in acidic residues; the sequence is SDSDSDSDREEQEEEEED. Residue serine 583 is modified to Phosphoserine. Over residues 605-626 the composition is skewed to pro residues; the sequence is PPVPPTFVSSPPPSPPSPPASP. A compositionally biased stretch (polar residues) spans 639 to 651; that stretch reads SEAQPQLEPSQAG.

Belongs to the PPP1R37 family. As to quaternary structure, interacts with PPP1CA.

Its function is as follows. Inhibits phosphatase activity of protein phosphatase 1 (PP1) complexes. The polypeptide is Protein phosphatase 1 regulatory subunit 37 (Ppp1r37) (Mus musculus (Mouse)).